The sequence spans 406 residues: Imidazolonepropionase (406 aa).

His-67 and His-69 together coordinate Fe(3+). Residues His-67 and His-69 each coordinate Zn(2+). 4-imidazolone-5-propanoate-binding residues include Arg-76, Tyr-139, and His-172. An N-formimidoyl-L-glutamate-binding site is contributed by Tyr-139. His-237 is a Fe(3+) binding site. A Zn(2+)-binding site is contributed by His-237. Gln-240 is a 4-imidazolone-5-propanoate binding site. Asp-312 serves as a coordination point for Fe(3+). Residue Asp-312 coordinates Zn(2+). 2 residues coordinate N-formimidoyl-L-glutamate: Asn-314 and Gly-316. Thr-317 is a binding site for 4-imidazolone-5-propanoate.

The protein belongs to the metallo-dependent hydrolases superfamily. HutI family. Requires Zn(2+) as cofactor. The cofactor is Fe(3+).

Its subcellular location is the cytoplasm. The enzyme catalyses 4-imidazolone-5-propanoate + H2O = N-formimidoyl-L-glutamate. Its pathway is amino-acid degradation; L-histidine degradation into L-glutamate; N-formimidoyl-L-glutamate from L-histidine: step 3/3. Catalyzes the hydrolytic cleavage of the carbon-nitrogen bond in imidazolone-5-propanoate to yield N-formimidoyl-L-glutamate. It is the third step in the universal histidine degradation pathway. This is Imidazolonepropionase from Paraburkholderia phymatum (strain DSM 17167 / CIP 108236 / LMG 21445 / STM815) (Burkholderia phymatum).